Reading from the N-terminus, the 202-residue chain is Chromophore lyase CpcT/CpeT 2 (202 aa).

This sequence belongs to the CpcT/CpeT biliprotein lyase family.

In terms of biological role, covalently attaches a chromophore to Cys residue(s) of phycobiliproteins. The chain is Chromophore lyase CpcT/CpeT 2 from Gloeobacter violaceus (strain ATCC 29082 / PCC 7421).